We begin with the raw amino-acid sequence, 128 residues long: Large ribosomal subunit protein bL17 (128 aa).

Belongs to the bacterial ribosomal protein bL17 family. As to quaternary structure, part of the 50S ribosomal subunit. Contacts protein L32.

This is Large ribosomal subunit protein bL17 from Streptococcus gordonii (strain Challis / ATCC 35105 / BCRC 15272 / CH1 / DL1 / V288).